A 308-amino-acid polypeptide reads, in one-letter code: GTPase Era (308 aa).

One can recognise an Era-type G domain in the interval 14–181 (RCGFVALIGA…KQALAAMVPP (168 aa)). The interval 22 to 29 (GAPNVGKS) is G1. GTP is bound at residue 22 to 29 (GAPNVGKS). The interval 48 to 52 (QTTRA) is G2. The G3 stretch occupies residues 69-72 (DTPG). Residues 69 to 73 (DTPGI) and 131 to 134 (NKVD) each bind GTP. Positions 131 to 134 (NKVD) are G4. The tract at residues 160-162 (ISA) is G5. The KH type-2 domain occupies 212 to 289 (LHQELPYQST…HLFLFVKVRE (78 aa)).

Belongs to the TRAFAC class TrmE-Era-EngA-EngB-Septin-like GTPase superfamily. Era GTPase family. In terms of assembly, monomer.

It localises to the cytoplasm. Its subcellular location is the cell inner membrane. Functionally, an essential GTPase that binds both GDP and GTP, with rapid nucleotide exchange. Plays a role in 16S rRNA processing and 30S ribosomal subunit biogenesis and possibly also in cell cycle regulation and energy metabolism. The chain is GTPase Era from Bradyrhizobium sp. (strain BTAi1 / ATCC BAA-1182).